An 829-amino-acid chain; its full sequence is Probable beta-glucosidase H (829 aa).

Aspartate 225 is a catalytic residue. Positions 389–548 (RMLSNAVIRF…DPEQMVRDAV (160 aa)) constitute a PA14 domain. Residues asparagine 416, asparagine 431, asparagine 473, asparagine 602, and asparagine 627 are each glycosylated (N-linked (GlcNAc...) asparagine).

The protein belongs to the glycosyl hydrolase 3 family.

The protein localises to the secreted. The enzyme catalyses Hydrolysis of terminal, non-reducing beta-D-glucosyl residues with release of beta-D-glucose.. The protein operates within glycan metabolism; cellulose degradation. Beta-glucosidases are one of a number of cellulolytic enzymes involved in the degradation of cellulosic biomass. Catalyzes the last step releasing glucose from the inhibitory cellobiose. The polypeptide is Probable beta-glucosidase H (bglH) (Aspergillus clavatus (strain ATCC 1007 / CBS 513.65 / DSM 816 / NCTC 3887 / NRRL 1 / QM 1276 / 107)).